The chain runs to 364 residues: tRNA 2-selenouridine synthase (364 aa).

Positions 14 to 137 constitute a Rhodanese domain; it reads LIADTPIIDV…LRQTAIQATI (124 aa). The S-selanylcysteine intermediate role is filled by C97.

It belongs to the SelU family. As to quaternary structure, monomer.

The enzyme catalyses 5-methylaminomethyl-2-thiouridine(34) in tRNA + selenophosphate + (2E)-geranyl diphosphate + H2O + H(+) = 5-methylaminomethyl-2-selenouridine(34) in tRNA + (2E)-thiogeraniol + phosphate + diphosphate. It carries out the reaction 5-methylaminomethyl-2-thiouridine(34) in tRNA + (2E)-geranyl diphosphate = 5-methylaminomethyl-S-(2E)-geranyl-thiouridine(34) in tRNA + diphosphate. It catalyses the reaction 5-methylaminomethyl-S-(2E)-geranyl-thiouridine(34) in tRNA + selenophosphate + H(+) = 5-methylaminomethyl-2-(Se-phospho)selenouridine(34) in tRNA + (2E)-thiogeraniol. The catalysed reaction is 5-methylaminomethyl-2-(Se-phospho)selenouridine(34) in tRNA + H2O = 5-methylaminomethyl-2-selenouridine(34) in tRNA + phosphate. Functionally, involved in the post-transcriptional modification of the uridine at the wobble position (U34) of tRNA(Lys), tRNA(Glu) and tRNA(Gln). Catalyzes the conversion of 2-thiouridine (S2U-RNA) to 2-selenouridine (Se2U-RNA). Acts in a two-step process involving geranylation of 2-thiouridine (S2U) to S-geranyl-2-thiouridine (geS2U) and subsequent selenation of the latter derivative to 2-selenouridine (Se2U) in the tRNA chain. The sequence is that of tRNA 2-selenouridine synthase from Shigella flexneri.